An 88-amino-acid chain; its full sequence is Alpha-latrotoxin associated low molecular weight protein (88 aa).

An N-terminal signal peptide occupies residues 1–18 (MSKLFFVAFLCLIISVFA).

The protein belongs to the arthropod CHH/MIH/GIH/VIH hormone family. In terms of tissue distribution, expressed by the venom gland.

Its subcellular location is the secreted. Functionally, may increase the toxicity of alpha-latrotoxin and/or other venom components. Is non-toxic to mice and to the cockroach Periplaneta americana. This is Alpha-latrotoxin associated low molecular weight protein from Latrodectus hesperus (Western black widow spider).